The primary structure comprises 178 residues: Small ribosomal subunit protein uS4 (178 aa).

The region spanning 104–166 is the S4 RNA-binding domain; sequence RRLQTIVFRK…SNSPMASENH (63 aa). Positions 158–178 are disordered; sequence NSPMASENHPERTAATSEENQ.

Belongs to the universal ribosomal protein uS4 family. Part of the 30S ribosomal subunit. Contacts protein S5. The interaction surface between S4 and S5 is involved in control of translational fidelity.

Functionally, one of the primary rRNA binding proteins, it binds directly to 16S rRNA where it nucleates assembly of the body of the 30S subunit. Its function is as follows. With S5 and S12 plays an important role in translational accuracy. In Methanococcus maripaludis (strain DSM 14266 / JCM 13030 / NBRC 101832 / S2 / LL), this protein is Small ribosomal subunit protein uS4.